We begin with the raw amino-acid sequence, 383 residues long: Cathepsin D (383 aa).

An N-terminal signal peptide occupies residues 1 to 18; sequence MKLLILTLFLATIVLAQA. The propeptide occupies 19–48; that stretch reads LTVPLNFHQASRESRRRVPQKWSNRLSALN. In terms of domain architecture, Peptidase A1 spans 63–378; it reads YYGAITIGTP…DFGNKQVGFA (316 aa). The active site involves D81. Residues C94 and C101 are joined by a disulfide bond. N118 and N238 each carry an N-linked (GlcNAc...) asparagine glycan. C259 and C263 form a disulfide bridge. D268 is an active-site residue. C302 and C339 are joined by a disulfide. N310 carries N-linked (GlcNAc...) asparagine glycosylation.

The protein belongs to the peptidase A1 family. In terms of assembly, monomer. Post-translationally, N-glycosylated on 2 out of the 3 potential sites. Glycans contain sulfated Mannose.

Its subcellular location is the lysosome. The protein resides in the secreted. It carries out the reaction Specificity similar to, but narrower than, that of pepsin A. Does not cleave the 4-Gln-|-His-5 bond in B chain of insulin.. Functionally, protease that may act during cell growth and/or development. This Dictyostelium discoideum (Social amoeba) protein is Cathepsin D (ctsD).